The sequence spans 63 residues: Large ribosomal subunit protein bL28 (63 aa).

The protein belongs to the bacterial ribosomal protein bL28 family.

This is Large ribosomal subunit protein bL28 from Desulfitobacterium hafniense (strain DSM 10664 / DCB-2).